We begin with the raw amino-acid sequence, 167 residues long: NAD(P)H-quinone oxidoreductase subunit I, chloroplastic (167 aa).

4Fe-4S ferredoxin-type domains lie at 55-84 and 95-124; these read GRIHFEFDKCIACEVCVRVCPIDLPVVDWK and LNYSIDFGICIFCGNCVEYCPTNCLSMTEE. The [4Fe-4S] cluster site is built by Cys64, Cys67, Cys70, Cys74, Cys104, Cys107, Cys110, and Cys114.

Belongs to the complex I 23 kDa subunit family. NDH is composed of at least 16 different subunits, 5 of which are encoded in the nucleus. It depends on [4Fe-4S] cluster as a cofactor.

The protein resides in the plastid. The protein localises to the chloroplast thylakoid membrane. The catalysed reaction is a plastoquinone + NADH + (n+1) H(+)(in) = a plastoquinol + NAD(+) + n H(+)(out). It catalyses the reaction a plastoquinone + NADPH + (n+1) H(+)(in) = a plastoquinol + NADP(+) + n H(+)(out). NDH shuttles electrons from NAD(P)H:plastoquinone, via FMN and iron-sulfur (Fe-S) centers, to quinones in the photosynthetic chain and possibly in a chloroplast respiratory chain. The immediate electron acceptor for the enzyme in this species is believed to be plastoquinone. Couples the redox reaction to proton translocation, and thus conserves the redox energy in a proton gradient. The chain is NAD(P)H-quinone oxidoreductase subunit I, chloroplastic from Barbarea verna (Land cress).